The following is a 253-amino-acid chain: Ubiquinone biosynthesis O-methyltransferase (253 aa).

Residues Arg41, Gly72, Asp93, and Leu136 each contribute to the S-adenosyl-L-methionine site.

The protein belongs to the methyltransferase superfamily. UbiG/COQ3 family.

It catalyses the reaction a 3-demethylubiquinol + S-adenosyl-L-methionine = a ubiquinol + S-adenosyl-L-homocysteine + H(+). The catalysed reaction is a 3-(all-trans-polyprenyl)benzene-1,2-diol + S-adenosyl-L-methionine = a 2-methoxy-6-(all-trans-polyprenyl)phenol + S-adenosyl-L-homocysteine + H(+). It functions in the pathway cofactor biosynthesis; ubiquinone biosynthesis. Its function is as follows. O-methyltransferase that catalyzes the 2 O-methylation steps in the ubiquinone biosynthetic pathway. This Azorhizobium caulinodans (strain ATCC 43989 / DSM 5975 / JCM 20966 / LMG 6465 / NBRC 14845 / NCIMB 13405 / ORS 571) protein is Ubiquinone biosynthesis O-methyltransferase.